Here is a 919-residue protein sequence, read N- to C-terminus: Probable dipeptidyl-aminopeptidase B (919 aa).

Basic and acidic residues predominate over residues 1–10 (MRRSDGHEET). The segment at 1-53 (MRRSDGHEETSEFLPMTHSRSVSAASQTSTDSSLSTESLFPREQKPFPNAMGG) is disordered. Residues 1–92 (MRRSDGHEET…AATGGGRARR (92 aa)) lie on the Cytoplasmic side of the membrane. Residues 21–38 (SVSAASQTSTDSSLSTES) show a composition bias toward low complexity. A helical; Signal-anchor for type II membrane protein membrane pass occupies residues 93–113 (IFWILVLLCLGGWLLAFVLFL). Residues 114–919 (TGGRANYQTA…MKRSLRLLSP (806 aa)) are Vacuolar-facing. 3 N-linked (GlcNAc...) asparagine glycosylation sites follow: Asn-200, Asn-352, and Asn-643. The active-site Charge relay system is the Ser-757. N-linked (GlcNAc...) asparagine glycosylation is present at Asn-811. Catalysis depends on charge relay system residues Asp-834 and His-867.

It belongs to the peptidase S9B family.

It is found in the vacuole membrane. The enzyme catalyses Release of an N-terminal dipeptide, Xaa-Yaa-|-Zaa-, from a polypeptide, preferentially when Yaa is Pro, provided Zaa is neither Pro nor hydroxyproline.. In terms of biological role, type IV dipeptidyl-peptidase which removes N-terminal dipeptides sequentially from polypeptides having unsubstituted N-termini provided that the penultimate residue is proline. This chain is Probable dipeptidyl-aminopeptidase B (dapB), found in Aspergillus fumigatus (strain CBS 144.89 / FGSC A1163 / CEA10) (Neosartorya fumigata).